The primary structure comprises 311 residues: Malate dehydrogenase (311 aa).

NAD(+)-binding positions include 7–13 and Asp34; that span reads GAAGGIG. The substrate site is built by Arg81 and Arg87. NAD(+)-binding positions include Asn94 and 117–119; that span reads ITN. Substrate contacts are provided by Asn119 and Arg153. Catalysis depends on His177, which acts as the Proton acceptor. Met227 contributes to the NAD(+) binding site.

It belongs to the LDH/MDH superfamily. MDH type 1 family. In terms of assembly, homodimer.

The enzyme catalyses (S)-malate + NAD(+) = oxaloacetate + NADH + H(+). In terms of biological role, catalyzes the reversible oxidation of malate to oxaloacetate. In Aliivibrio fischeri (strain MJ11) (Vibrio fischeri), this protein is Malate dehydrogenase.